The primary structure comprises 96 residues: Integration host factor subunit beta (96 aa).

The protein belongs to the bacterial histone-like protein family. As to quaternary structure, heterodimer of an alpha and a beta chain.

This protein is one of the two subunits of integration host factor, a specific DNA-binding protein that functions in genetic recombination as well as in transcriptional and translational control. This is Integration host factor subunit beta from Dichelobacter nodosus (strain VCS1703A).